We begin with the raw amino-acid sequence, 264 residues long: Putative HTH-type transcriptional regulator TrmBL2 (264 aa).

A DNA-binding region (H-T-H motif) is located at residues 33–54; it reads LTPAELASVSEVPAPRTYDVLR.

It belongs to the transcriptional regulator TrmB family.

Its function is as follows. Binds to the maltodextrin transport gene cluster (mdxE operon) promoter and to some other TGM (Thermococcales-Glycolytic-Motif) sequences, but not exclusively. The protein is Putative HTH-type transcriptional regulator TrmBL2 (trmBL2) of Pyrococcus furiosus (strain ATCC 43587 / DSM 3638 / JCM 8422 / Vc1).